The following is a 305-amino-acid chain: E3 ubiquitin-protein ligase RNF115 (305 aa).

At alanine 2 the chain carries N-acetylalanine. Residues 100 to 110 (NRANERGHQTH) show a composition bias toward basic and acidic residues. Residues 100–139 (NRANERGHQTHTDFWGPSRPPRLPMTRRYRSRGSTRPDRS) form a disordered region. Position 133 is a phosphoserine (serine 133). The segment at 229 to 270 (CPVCKEDYTVEEKVRQLPCNHFFHSSCIVPWLELHDTCPVCR) adopts an RING-type zinc-finger fold. Residues 274–305 (NGEDSTRQTQSSEASASNRFSNDSQLHDRWTF) are disordered. Residues 280-297 (RQTQSSEASASNRFSNDS) are compositionally biased toward polar residues.

Interacts with RAB7A. Interacts with EGFR and FLT3. Interacts with BST2. Interacts with STX17. Interacts with YWHAE. Phosphorylated by AKT1, allowing association with the 14-3-3 chaperones that facilitates associating with TLRs. Post-translationally, deubiquitinated by USP9X; antogonizing its autoubiquitination and subsequent proteasomal degradation. In terms of processing, RING-type zinc finger-dependent and E2-dependent autoubiquitination.

It localises to the cytoplasm. Its subcellular location is the cytoplasmic vesicle. The protein localises to the phagosome. The protein resides in the nucleus. It is found in the endoplasmic reticulum. It localises to the golgi apparatus. The enzyme catalyses S-ubiquitinyl-[E2 ubiquitin-conjugating enzyme]-L-cysteine + [acceptor protein]-L-lysine = [E2 ubiquitin-conjugating enzyme]-L-cysteine + N(6)-ubiquitinyl-[acceptor protein]-L-lysine.. It functions in the pathway protein modification; protein ubiquitination. Functionally, E3 ubiquitin-protein ligase that catalyzes the 'Lys-48'- and/or 'Lys-63'-linked polyubiquitination of various substrates and thereby plays a role in a number of signaling pathways including autophagy, innate immunity, cell proliferation and cell death. Plays a role in the endosomal trafficking and degradation of membrane receptors including EGFR, FLT3, MET and CXCR4 through their polyubiquitination. Participates together with BST2 in antiviral immunity by facilitating the internalization of HIV-1 virions into intracellular vesicles leading to their lysosomal degradation. Also possesses an antiviral activity independently of BST2 by promoting retroviral GAG proteins ubiquitination, redistribution to endo-lysosomal compartments and, ultimately, lysosomal degradation. Catalyzes distinct types of ubiquitination on MAVS and STING1 at different phases of viral infection to promote innate antiviral response. Mediates the 'Lys-48'-linked ubiquitination of MAVS leading to its proteasomal degradation and ubiquitinates STING1 via 'Lys-63'-linked polyubiquitination, critical for its oligomerization and the subsequent recruitment of TBK1. Plays a positive role in the autophagosome-lysosome fusion by interacting with STX17 and enhancing its stability without affecting 'Lys-48'- or 'Lys-63'-linked polyubiquitination levels, which in turn promotes autophagosome maturation. Negatively regulates TLR-induced expression of proinflammatory cytokines by catalyzing 'Lys-11'-linked ubiquitination of RAB1A and RAB13 to inhibit post-ER trafficking of TLRs to the Golgi by RAB1A and subsequently from the Golgi apparatus to the cell surface by RAB13. This chain is E3 ubiquitin-protein ligase RNF115, found in Mus musculus (Mouse).